The chain runs to 228 residues: UPF0758 protein CLI_3057 (228 aa).

One can recognise an MPN domain in the interval 106 to 228; that stretch reads KINTPLDVSN…YVSMKEKGTI (123 aa). Positions 177, 179, and 190 each coordinate Zn(2+). Residues 177–190 carry the JAMM motif motif; sequence HNHPSGDPTPSKED.

It belongs to the UPF0758 family.

This chain is UPF0758 protein CLI_3057, found in Clostridium botulinum (strain Langeland / NCTC 10281 / Type F).